We begin with the raw amino-acid sequence, 496 residues long: Tripartite motif-containing protein 30A (496 aa).

The segment at 15-59 (CPICLELLKEPVSADCNHSFCRACITLNYESNRNTDGKGNCPVCR) adopts an RING-type zinc-finger fold. The B box-type zinc finger occupies 91–132 (QKVNICAQHGEKLRLFCRKDMMVICWLCERSQEHRGHQTALI). Zn(2+)-binding residues include C96, H99, C118, and H124. The stretch at 173–239 (NQIQINVENV…RDLISDVEHH (67 aa)) forms a coiled coil. The tract at residues 205–210 (KKEKKE) is highly hydrophilic. A Nuclear localization signal motif is present at residues 268–276 (TVPQKRKRT). One can recognise a B30.2/SPRY domain in the interval 281 to 496 (DLKGMLQVYQ…EPMTICGPPS (216 aa)).

As to quaternary structure, homomultimer. Interacts with NR2C2/TAK1, TAB2 and TAB3. Does not interact with NLRP3, NLRC4 or TAB1. As to expression, highly expressed in spleen and lymph nodes (at protein level).

The protein localises to the cytoplasm. Its subcellular location is the nucleus. Functionally, trans-acting factor that regulates gene expression of interleukin 2 receptor alpha chain. May affect IL2R-alpha expression through cis-acting negative regulatory elements or through competition with proteins that bind to enhancer or activator sequences. Negatively regulates Toll-like receptor (TLR)-mediated activation of NFKB by promoting degradation of TAB2 and TAB3 and preventing TRAF6 autoubiquitination. Negatively regulates production of reactive oxygen species (ROS) which inhibits activation of the NLRP3 inflammasome complex. This, in turn, regulates activation of CASP1 and subsequent cleavage of IL1B and IL18. No activity detected against a range of retroviruses including a number of lentiviruses, gammaretroviruses and betaretroviruses. The sequence is that of Tripartite motif-containing protein 30A (Trim30a) from Mus musculus (Mouse).